A 188-amino-acid chain; its full sequence is F-box only protein 36 (188 aa).

The 47-residue stretch at 91 to 137 (FDFLERLSDDLLLNIISYLDLEDIARLCQTSHRFAKLCMSDKLWEQI) folds into the F-box domain.

Directly interacts with SKP1 and CUL1.

Its function is as follows. Substrate-recognition component of the SCF (SKP1-CUL1-F-box protein)-type E3 ubiquitin ligase complex. The polypeptide is F-box only protein 36 (FBXO36) (Pongo abelii (Sumatran orangutan)).